Reading from the N-terminus, the 264-residue chain is tRNA (guanine-N(1)-)-methyltransferase (264 aa).

Residues G125 and 145-150 (LGDFVL) each bind S-adenosyl-L-methionine.

This sequence belongs to the RNA methyltransferase TrmD family. Homodimer.

It is found in the cytoplasm. The catalysed reaction is guanosine(37) in tRNA + S-adenosyl-L-methionine = N(1)-methylguanosine(37) in tRNA + S-adenosyl-L-homocysteine + H(+). Its function is as follows. Specifically methylates guanosine-37 in various tRNAs. The protein is tRNA (guanine-N(1)-)-methyltransferase of Burkholderia vietnamiensis (strain G4 / LMG 22486) (Burkholderia cepacia (strain R1808)).